The following is a 333-amino-acid chain: Flap endonuclease 1 (333 aa).

Positions 1–99 (MGVALRDILA…ETNAERKKLR (99 aa)) are N-domain. Mg(2+) contacts are provided by aspartate 28, aspartate 81, glutamate 153, glutamate 155, aspartate 174, aspartate 176, and aspartate 235. An I-domain region spans residues 117 to 256 (EAYRQARSAT…TALKIVKSGG (140 aa)). Residues 325–333 (GQKTLESFF) are interaction with PCNA.

The protein belongs to the XPG/RAD2 endonuclease family. FEN1 subfamily. As to quaternary structure, interacts with PCNA. PCNA stimulates the nuclease activity without altering cleavage specificity. It depends on Mg(2+) as a cofactor.

In terms of biological role, structure-specific nuclease with 5'-flap endonuclease and 5'-3' exonuclease activities involved in DNA replication and repair. During DNA replication, cleaves the 5'-overhanging flap structure that is generated by displacement synthesis when DNA polymerase encounters the 5'-end of a downstream Okazaki fragment. Binds the unpaired 3'-DNA end and kinks the DNA to facilitate 5' cleavage specificity. Cleaves one nucleotide into the double-stranded DNA from the junction in flap DNA, leaving a nick for ligation. Also involved in the base excision repair (BER) pathway. Acts as a genome stabilization factor that prevents flaps from equilibrating into structures that lead to duplications and deletions. Also possesses 5'-3' exonuclease activity on nicked or gapped double-stranded DNA. The protein is Flap endonuclease 1 of Methanoregula boonei (strain DSM 21154 / JCM 14090 / 6A8).